The following is a 142-amino-acid chain: Putative pre-16S rRNA nuclease (142 aa).

It belongs to the YqgF nuclease family.

It is found in the cytoplasm. Functionally, could be a nuclease involved in processing of the 5'-end of pre-16S rRNA. The sequence is that of Putative pre-16S rRNA nuclease from Lactobacillus delbrueckii subsp. bulgaricus (strain ATCC 11842 / DSM 20081 / BCRC 10696 / JCM 1002 / NBRC 13953 / NCIMB 11778 / NCTC 12712 / WDCM 00102 / Lb 14).